We begin with the raw amino-acid sequence, 1448 residues long: Gag-Pol polyprotein (1448 aa).

Glycine 2 is lipidated: N-myristoyl glycine; by host. A Nuclear export signal motif is present at residues 16-22; the sequence is LEKIRLR. Positions 26 to 32 match the Nuclear localization signal motif; sequence KKKYMLK. A compositionally biased stretch (low complexity) spans 218 to 227; the sequence is HPQQAPQQGQ. Positions 218-237 are disordered; that stretch reads HPQQAPQQGQLREPSGSDIA. CCHC-type zinc fingers lie at residues 391–408 and 412–429; these read IKCW…QCRA and QGCW…KCPN. The tract at residues 440–461 is disordered; the sequence is LGKEAPQFPHGSSASGADANCS. The Peptidase A2 domain occupies 517-586; sequence VEVLLDTGAD…TPINIFGRNL (70 aa). Aspartate 522 (for protease activity; shared with dimeric partner) is an active-site residue. Residues 640–830 form the Reverse transcriptase domain; sequence DGQLEEAPPT…PPFQWMGYEL (191 aa). Positions 706, 781, and 782 each coordinate Mg(2+). Positions 823-831 are RT 'primer grip'; that stretch reads FQWMGYELW. The Tryptophan repeat motif signature appears at 993-1009; sequence WEQWWTDYWQVTWIPEW. Residues 1029–1152 enclose the RNase H type-1 domain; the sequence is IEGEETYYVD…IDHLVSQGIR (124 aa). Mg(2+) contacts are provided by aspartate 1038, glutamate 1073, aspartate 1093, and aspartate 1144. The segment at 1158-1199 adopts an Integrase-type zinc-finger fold; sequence EKIEPAQEEHSKYHSNIKELVFKFGLPRLVAKQIVDTCDKCH. Zn(2+) is bound by residues histidine 1167, histidine 1171, cysteine 1195, and cysteine 1198. One can recognise an Integrase catalytic domain in the interval 1209–1359; the sequence is VNSDLGTWQM…TPAERLINMI (151 aa). Residues aspartate 1219 and aspartate 1271 each coordinate Mg(2+). Positions 1378–1425 form a DNA-binding region, integrase-type; sequence FRVYYREGRDQLWKGPGELLWKGEGAVILKVGTDIKVVPRRKAKIIKD. The disordered stretch occupies residues 1426–1448; the sequence is YGGGKEMDSSSHMEDTGEAREVA.

In terms of assembly, homotrimer. Interacts with gp41 (via C-terminus). Homodimer. The active site consists of two apposed aspartic acid residues. As to quaternary structure, heterodimer of p66 RT and p51 RT (RT p66/p51). Heterodimerization of RT is essential for DNA polymerase activity. Despite the sequence identities, p66 RT and p51 RT have distinct folding. In terms of assembly, homotetramer; may further associate as a homohexadecamer. Mg(2+) is required as a cofactor. In terms of processing, specific enzymatic cleavages by the viral protease yield mature proteins. The protease is released by autocatalytic cleavage. The polyprotein is cleaved during and after budding, this process is termed maturation. Proteolytic cleavage of p66 RT removes the RNase H domain to yield the p51 RT subunit. Post-translationally, capsid protein p24 is phosphorylated.

It is found in the virion. The protein resides in the host nucleus. The protein localises to the host cytoplasm. It localises to the host cell membrane. The enzyme catalyses Specific for a P1 residue that is hydrophobic, and P1' variable, but often Pro.. It carries out the reaction Endohydrolysis of RNA in RNA/DNA hybrids. Three different cleavage modes: 1. sequence-specific internal cleavage of RNA. Human immunodeficiency virus type 1 and Moloney murine leukemia virus enzymes prefer to cleave the RNA strand one nucleotide away from the RNA-DNA junction. 2. RNA 5'-end directed cleavage 13-19 nucleotides from the RNA end. 3. DNA 3'-end directed cleavage 15-20 nucleotides away from the primer terminus.. The catalysed reaction is 3'-end directed exonucleolytic cleavage of viral RNA-DNA hybrid.. It catalyses the reaction DNA(n) + a 2'-deoxyribonucleoside 5'-triphosphate = DNA(n+1) + diphosphate. The viral protease is inhibited by many synthetic protease inhibitors (PIs), such as amprenavir, atazanavir, indinavir, loprinavir, nelfinavir, ritonavir and saquinavir. RT can be inhibited either by nucleoside RT inhibitors (NRTIs) or by non nucleoside RT inhibitors (NNRTIs). NRTIs act as chain terminators, whereas NNRTIs inhibit DNA polymerization by binding a small hydrophobic pocket near the RT active site and inducing an allosteric change in this region. Classical NRTIs are abacavir, adefovir (PMEA), didanosine (ddI), lamivudine (3TC), stavudine (d4T), tenofovir (PMPA), zalcitabine (ddC), and zidovudine (AZT). Classical NNRTIs are atevirdine (BHAP U-87201E), delavirdine, efavirenz (DMP-266), emivirine (I-EBU), and nevirapine (BI-RG-587). The tritherapies used as a basic effective treatment of AIDS associate two NRTIs and one NNRTI. Use of protease inhibitors in tritherapy regimens permit more ambitious therapeutic strategies. Functionally, gag-Pol polyprotein and Gag polyprotein may regulate their own translation, by the binding genomic RNA in the 5'-UTR. At low concentration, Gag-Pol and Gag would promote translation, whereas at high concentration, the polyproteins encapsidate genomic RNA and then shut off translation. In terms of biological role, matrix protein p17 has two main functions: in infected cell, it targets Gag and Gag-pol polyproteins to the plasma membrane via a multipartite membrane-binding signal, that includes its myristointegration complex. The myristoylation signal and the NLS exert conflicting influences its subcellular localization. The key regulation of these motifs might be phosphorylation of a portion of MA molecules on the C-terminal tyrosine at the time of virus maturation, by virion-associated cellular tyrosine kinase. Implicated in the release from host cell mediated by Vpu. Its function is as follows. Capsid protein p24 forms the conical core that encapsulates the genomic RNA-nucleocapsid complex in the virion. The core is constituted by capsid protein hexamer subunits. The core is disassembled soon after virion entry. Interaction with host PPIA/CYPA protects the virus from restriction by host TRIM5-alpha and from an unknown antiviral activity in host cells. This capsid restriction by TRIM5 is one of the factors which restricts SIV to the simian species. Nucleocapsid protein p7 encapsulates and protects viral dimeric unspliced (genomic) RNA. Binds these RNAs through its zinc fingers. Facilitates rearangement of nucleic acid secondary structure during retrotranscription of genomic RNA. This capability is referred to as nucleic acid chaperone activity. Functionally, the aspartyl protease mediates proteolytic cleavages of Gag and Gag-Pol polyproteins during or shortly after the release of the virion from the plasma membrane. Cleavages take place as an ordered, step-wise cascade to yield mature proteins. This process is called maturation. Displays maximal activity during the budding process just prior to particle release from the cell. Also cleaves Nef and Vif, probably concomitantly with viral structural proteins on maturation of virus particles. Hydrolyzes host EIF4GI and PABP1 in order to shut off the capped cellular mRNA translation. The resulting inhibition of cellular protein synthesis serves to ensure maximal viral gene expression and to evade host immune response. In terms of biological role, reverse transcriptase/ribonuclease H (RT) is a multifunctional enzyme that converts the viral dimeric RNA genome into dsDNA in the cytoplasm, shortly after virus entry into the cell. This enzyme displays a DNA polymerase activity that can copy either DNA or RNA templates, and a ribonuclease H (RNase H) activity that cleaves the RNA strand of RNA-DNA heteroduplexes in a partially processive 3' to 5' endonucleasic mode. Conversion of viral genomic RNA into dsDNA requires many steps. A tRNA binds to the primer-binding site (PBS) situated at the 5'-end of the viral RNA. RT uses the 3' end of the tRNA primer to perform a short round of RNA-dependent minus-strand DNA synthesis. The reading proceeds through the U5 region and ends after the repeated (R) region which is present at both ends of viral RNA. The portion of the RNA-DNA heteroduplex is digested by the RNase H, resulting in a ssDNA product attached to the tRNA primer. This ssDNA/tRNA hybridizes with the identical R region situated at the 3' end of viral RNA. This template exchange, known as minus-strand DNA strong stop transfer, can be either intra- or intermolecular. RT uses the 3' end of this newly synthesized short ssDNA to perform the RNA-dependent minus-strand DNA synthesis of the whole template. RNase H digests the RNA template except for two polypurine tracts (PPTs) situated at the 5'-end and near the center of the genome. It is not clear if both polymerase and RNase H activities are simultaneous. RNase H can probably proceed both in a polymerase-dependent (RNA cut into small fragments by the same RT performing DNA synthesis) and a polymerase-independent mode (cleavage of remaining RNA fragments by free RTs). Secondly, RT performs DNA-directed plus-strand DNA synthesis using the PPTs that have not been removed by RNase H as primers. PPTs and tRNA primers are then removed by RNase H. The 3' and 5' ssDNA PBS regions hybridize to form a circular dsDNA intermediate. Strand displacement synthesis by RT to the PBS and PPT ends produces a blunt ended, linear dsDNA copy of the viral genome that includes long terminal repeats (LTRs) at both ends. Its function is as follows. Integrase catalyzes viral DNA integration into the host chromosome, by performing a series of DNA cutting and joining reactions. This enzyme activity takes place after virion entry into a cell and reverse transcription of the RNA genome in dsDNA. The first step in the integration process is 3' processing. This step requires a complex comprising the viral genome, matrix protein, Vpr and integrase. This complex is called the pre-integration complex (PIC). The integrase protein removes 2 nucleotides from each 3' end of the viral DNA, leaving recessed CA OH's at the 3' ends. In the second step, the PIC enters cell nucleus. This process is mediated through integrase and Vpr proteins, and allows the virus to infect a non dividing cell. This ability to enter the nucleus is specific of lentiviruses, other retroviruses cannot and rely on cell division to access cell chromosomes. In the third step, termed strand transfer, the integrase protein joins the previously processed 3' ends to the 5' ends of strands of target cellular DNA at the site of integration. The 5'-ends are produced by integrase-catalyzed staggered cuts, 5 bp apart. A Y-shaped, gapped, recombination intermediate results, with the 5'-ends of the viral DNA strands and the 3' ends of target DNA strands remaining unjoined, flanking a gap of 5 bp. The last step is viral DNA integration into host chromosome. This involves host DNA repair synthesis in which the 5 bp gaps between the unjoined strands are filled in and then ligated. Since this process occurs at both cuts flanking the SIV genome, a 5 bp duplication of host DNA is produced at the ends of SIV integration. Alternatively, Integrase may catalyze the excision of viral DNA just after strand transfer, this is termed disintegration. This is Gag-Pol polyprotein (gag-pol) from Cercopithecidae (Old World monkeys).